Consider the following 706-residue polypeptide: Choline transporter-like protein 2 (706 aa).

At 1–33 (MGDERPHYYGKHGTPQKYDPTFKGPIYNRGCTD) the chain is on the cytoplasmic side. At threonine 14 the chain carries Phosphothreonine. The helical transmembrane segment at 34-54 (IICCVFLLLAIVGYVAVGIIA) threads the bilayer. The Extracellular segment spans residues 55–232 (WTHGDPRKVI…RIFEDYTVSW (178 aa)). N-linked (GlcNAc...) asparagine glycosylation is found at asparagine 187 and asparagine 200. A helical membrane pass occupies residues 233–253 (YWIIIGLVIAMAMSLLFIILL). Residues 254–256 (RFL) are Cytoplasmic-facing. The helical transmembrane segment at 257–277 (AGIMVWVMIIMVILVLGYGIF) threads the bilayer. Residues 278 to 315 (HCYMEYSRLRGEAGSDVSLVDLGFQTDFRVYLHLRQTW) lie on the Extracellular side of the membrane. The helical transmembrane segment at 316-336 (LAFMIILSILEVIIILLLIFL) threads the bilayer. Residues 337–364 (RKRILIAIALIKEASRAVGYVMCSLLYP) are Cytoplasmic-facing. Residues 365-385 (LVTFFLLCLCIAYWASTAVFL) traverse the membrane as a helical segment. Over 386–457 (STSNEAVYKI…FNAFMFFWLA (72 aa)) the chain is Extracellular. The N-linked (GlcNAc...) asparagine glycan is linked to asparagine 417. The chain crosses the membrane as a helical span at residues 458–480 (NFVLALGQVTLAGAFASYYWALR). The Cytoplasmic portion of the chain corresponds to 481-504 (KPDDLPAFPLFSAFGRALRYHTGS). The chain crosses the membrane as a helical span at residues 505 to 525 (LAFGALILAIVQIIRVILEYL). The Extracellular portion of the chain corresponds to 526-563 (DQRLKAAENKFAKCLMTCLKCCFWCLEKFIKFLNRNAY). A helical membrane pass occupies residues 564–584 (IMIAIYGTNFCTSARNAFFLL). The Cytoplasmic segment spans residues 585 to 599 (MRNIIRVAVLDKVTD). The helical transmembrane segment at 600–620 (FLFLLGKLLIVGSVGILAFFF) threads the bilayer. Topologically, residues 621-638 (FTHRIRIVQDTAPPLNYY) are extracellular. A helical membrane pass occupies residues 639 to 659 (WVPILTVIVGSYLIAHGFFSV). The Cytoplasmic portion of the chain corresponds to 660 to 706 (YGMCVDTLFLCFLEDLERNDGSAERPYFMSSTLKKLLNKTNKKAAES).

Belongs to the CTL (choline transporter-like) family. Interacts with COCH. As to expression, present in supporting cells of the inner ear (at protein level). Expressed in inner ear vestibular tissue.

It localises to the cell membrane. Its subcellular location is the mitochondrion outer membrane. It carries out the reaction choline(out) + n H(+)(in) = choline(in) + n H(+)(out). The enzyme catalyses ethanolamine(out) + n H(+)(in) = ethanolamine(in) + n H(+)(out). Functionally, choline/H+ antiporter, mainly in mitochodria. Also acts as a low-affinity ethanolamine/H+ antiporter, regulating the supply of extracellular ethanolamine (Etn) for the CDP-Etn pathway, redistribute intracellular Etn and balance the CDP-Cho and CDP-Etn arms of the Kennedy pathway. In terms of biological role, does not exhibit choline transporter activity. This is Choline transporter-like protein 2 from Homo sapiens (Human).